A 1333-amino-acid chain; its full sequence is MDPPQLLFYVNGQKVVENNVDPEMMLLPYLRKNLRLTGTKYGCGGGGCGACTVMISRYNPSTKSIRHHPVNACLTPICSLYGTAVTTVEGIGNTRTRLHPVQERIAKCHSTQCGFCTPGMVMSMYALLRNHPEPSLDQLTDALGGNLCRCTGYRPIIDACKTFCRASGCCESKENGVCCLDQGINGSAEFQEGDETSPELFSEKEFQPLDPTQELIFPPELMRIAEKQPPKTRVFYSNRMTWISPVTLEELVEAKFKYPGAPIVMGYTSVGPEVKFKGVFHPIIISPDRIEELSIINQTGDGLTLGAGLSLDQVKDILTDVVQKLPEETTQTYRALLKHLRTLAGSQIRNMASLGGHIVSRHLDSDLNPLLAVGNCTLNLLSKDGKRQIPLSEQFLRKCPDSDLKPQEVLVSVNIPCSRKWEFVSAFRQAQRQQNALAIVNSGMRVLFREGGGVIKELSILYGGVGPTTIGAKNSCQKLIGRPWNEEMLDTACRLVLDEVTLAGSAPGGKVEFKRTLIISFLFKFYLEVLQGLKREDPGHYPSLTNNYESALEDLHSKHHWRTLTHQNVDSMQLPQDPIGRPIMHLSGIKHATGEAIYCDDMPAVDRELFLTFVTSSRAHAKIVSIDLSEALSLPGVVDIITADHLQDATTFGTETLLATDKVHCVGQLVCAVIADSETRAKQAAKHVKVVYRDLEPLILTIEEAIQHKSFFESERKLECGNVDEAFKIADQILEGEIHIGGQEHFYMETQSMLVVPKGEDGEIDIYVSTQFPKHIQDIVAATLKLSVNKVMCHVRRVGGAFGGKVGKTSIMAAITAFAASKHGRAVRCTLERGEDMLITGGRHPYLGKYKVGFMRDGRIVALDVEHYCNGGSSLDESLWVIEMGLLKMDNAYKFPNLRCRGWACRTNLPSHTALRGFGFPQAGLVTEACVTEVAIRCGLSPEQVRTINMYKQIDNTHYKQEFSAKTLFECWRECMAKCSYSERKTAVGKFNAENSWKKRGMAVIPLKFPVGVGSVAMGQAAALVHIYLDGSALVSHGGIEMGQGVHTKMIQVVSRELKMPMSSVHLRGTSTETVPNTNASGGSVVADLNGLAVKDACQTLLKRLEPIISKNPQGTWKDWAQTAFDQSVSLSAVGYFRGYESNINWEKGEGHPFEYFVYGAACSEVEIDCLTGDHKNIRTDIVMDVGHSINPALDIGQVEGAFIQGMGLYTIEELSYSPQGILYSRGPNQYKIPAICDIPTEMHISFLPPSEHSNTLYSSKGLGESGVFLGCSVFFAIHDAVRAARQERGISGPWKLTSPLTPEKIRMACEDKFTKMIPRDEPGSYVPWNIPV.

Residues 4–91 (PQLLFYVNGQ…GTAVTTVEGI (88 aa)) enclose the 2Fe-2S ferredoxin-type domain. The [2Fe-2S] cluster site is built by cysteine 43, cysteine 48, cysteine 51, and cysteine 73. Position 112 (glutamine 112) interacts with Mo-molybdopterin. [2Fe-2S] cluster-binding residues include cysteine 113, cysteine 116, cysteine 148, and cysteine 150. Cysteine 150 contacts Mo-molybdopterin. Positions 235–420 (FYSNRMTWIS…VSVNIPCSRK (186 aa)) constitute an FAD-binding PCMH-type domain. FAD contacts are provided by residues 263–270 (IVMGYTSV), alanine 344, serine 353, histidine 357, aspartate 366, and leucine 410. Mo-molybdopterin is bound by residues 801 to 802 (AF) and methionine 1042. Serine 1063 is subject to Phosphoserine. Mo-molybdopterin contacts are provided by residues 1083-1086 (GSVV), glutamine 1198, and leucine 1263. Glutamate 1265 (proton acceptor; for azaheterocycle hydroxylase activity) is an active-site residue.

It belongs to the xanthine dehydrogenase family. As to quaternary structure, homodimer. [2Fe-2S] cluster is required as a cofactor. The cofactor is FAD. Requires Mo-molybdopterin as cofactor. Post-translationally, the N-terminus is blocked. In terms of tissue distribution, expression in liver (at protein level). Also detected in heart, lung, spleen and kidney.

The protein localises to the cytoplasm. It catalyses the reaction an aldehyde + O2 + H2O = a carboxylate + H2O2 + H(+). It carries out the reaction retinal + O2 + H2O = retinoate + H2O2 + H(+). Its activity is regulated as follows. Inhibited by menadione and isovanillin. Not inhibited by allopurinol, a xanthine dehydrogenase potent inhibitor. Inhibited by the flavonoids quercetin, myricetin and genistein. Nitric oxide generation is inhibited by raloxifene and competitively inhibited by an increase in oxygen levels. Oxidase with broad substrate specificity, oxidizing aromatic azaheterocycles, such as N1-methylnicotinamide, N-methylphthalazinium and phthalazine, as well as aldehydes, such as benzaldehyde, retinal, pyridoxal, and vanillin. Plays a role in the metabolism of xenobiotics and drugs containing aromatic azaheterocyclic substituents. Participates in the bioactivation of prodrugs such as famciclovir, catalyzing the oxidation step from 6-deoxypenciclovir to penciclovir, which is a potent antiviral agent. Is probably involved in the regulation of reactive oxygen species homeostasis. Is a prominent source of superoxide generation via the one-electron reduction of molecular oxygen. Also catalyzes nitric oxide (NO) production; under anaerobic conditions, reduces nitrite to NO with NADH or aldehyde as electron donor, but under aerobic conditions, NADH is the preferred substrate. These reactions may be catalyzed by several isozymes. May play a role in adipogenesis. The chain is Aldehyde oxidase 1 from Rattus norvegicus (Rat).